We begin with the raw amino-acid sequence, 658 residues long: Transmembrane 9 superfamily member 11 (658 aa).

The first 23 residues, 1 to 23 (MRSMDRFGIWVLAILLVIQSSFG), serve as a signal peptide directing secretion. At 24-291 (FYLPGSYPHK…LKMEGSKVHW (268 aa)) the chain is on the lumenal side. Residues 292–312 (FSILNSLMVITFLAGIVLVIF) form a helical membrane-spanning segment. Residues 313–364 (LRTVRRDLTRYEELDKEAQAQMNEELSGWKLVVGDVFRAPSNASLLCVMVGD) are Cytoplasmic-facing. Residues 365–385 (GVQILGMAVVTILFAALGFMS) form a helical membrane-spanning segment. At 386-391 (PASRGT) the chain is on the lumenal side. Residues 392–412 (LITGMLFFYMILGIAAGYVSV) form a helical membrane-spanning segment. At 413-432 (RLWRTIGCGEHRGWMSVAWK) the chain is on the cytoplasmic side. Residues 433 to 453 (AACFFPGIAFLILTTLNFLLW) form a helical membrane-spanning segment. Residues 454-462 (GSHSTGAIP) are Lumenal-facing. Residues 463-483 (FSLFVILLLLWFCISVPLTLI) traverse the membrane as a helical segment. The Cytoplasmic segment spans residues 484–515 (GGYFGAKAPHIEFPVRTNQIPREIPAQKYPSW). Residues 516-536 (LLVLGAGTLPFGTLFIELFFI) traverse the membrane as a helical segment. The Lumenal portion of the chain corresponds to 537–547 (MSSIWMGRVYY). The helical transmembrane segment at 548–568 (VFGFLFVVLILLVVVCAEVSL) threads the bilayer. The Cytoplasmic segment spans residues 569-586 (VLTYMHLCVEDYKWWWKS). A helical membrane pass occupies residues 587–607 (FFASGSVAIYIFIYSINYLVF). Residues 608–619 (DLKSLSGPVSAT) lie on the Lumenal side of the membrane. The chain crosses the membrane as a helical span at residues 620-640 (LYLGYSLFMVLAIMLATGTVG). Residues 641–658 (FLSSFWFVHYLFSSVKLD) lie on the Cytoplasmic side of the membrane. Positions 647-652 (FVHYLF) match the Endoplasmic reticulum export signal motif. The short motif at 656-658 (KLD) is the Golgi retention signal element.

This sequence belongs to the nonaspanin (TM9SF) (TC 9.A.2) family.

The protein resides in the endosome membrane. The protein localises to the golgi apparatus membrane. The protein is Transmembrane 9 superfamily member 11 of Arabidopsis thaliana (Mouse-ear cress).